A 364-amino-acid chain; its full sequence is MAMENQVLTPHVYWAQRHRELYLRVELSDVQNPAISTTENVLHFKAQGHGAKGDNVYEFHLEFLDLVKPEPVYKLTQRQVNITVQKKVSQWWERLTKQEKRPLFLAPDFDRWLDESDAEMELRAKEEERLNKLRLESEGSPETLTNLRKGYLFMYNLVQFLGFSWIFVNLTVRFCILGKESFYDTFHTVADMMYFCQMLAVVETINAAIGVTTSPVLPSLIQLLGRNFILFIIFGTMEEMQNKAVVFFVFYLWSAIEIFRYSFYMLTCIDMDWEVLTWLRYTLWIPLYPLGCLAEAVSVVQSIPIFNETGRFSFTLPYPVKIKVRFSFFLQIYLIMIFLGLYINFRHLYKQRRRRYGQKKKKIH.

Residues 1-151 lie on the Cytoplasmic side of the membrane; the sequence is MAMENQVLTP…ETLTNLRKGY (151 aa). In terms of domain architecture, CS spans 7–96; that stretch reads VLTPHVYWAQ…KVSQWWERLT (90 aa). Residue threonine 9 is modified to Phosphothreonine. Residues 113–138 are a coiled coil; sequence LDESDAEMELRAKEEERLNKLRLESE. A phosphoserine mark is found at serine 116 and serine 137. Residues 152–172 form a helical membrane-spanning segment; it reads LFMYNLVQFLGFSWIFVNLTV. Over 173–191 the chain is Lumenal; it reads RFCILGKESFYDTFHTVAD. Residues 192 to 212 traverse the membrane as a helical segment; it reads MMYFCQMLAVVETINAAIGVT. Residues 213 to 214 are Cytoplasmic-facing; that stretch reads TS. A helical transmembrane segment spans residues 215–235; sequence PVLPSLIQLLGRNFILFIIFG. Residues 236–244 are Lumenal-facing; the sequence is TMEEMQNKA. Residues 245–265 form a helical membrane-spanning segment; that stretch reads VVFFVFYLWSAIEIFRYSFYM. Residues 266 to 282 lie on the Cytoplasmic side of the membrane; that stretch reads LTCIDMDWEVLTWLRYT. Residues 283-303 form a helical membrane-spanning segment; that stretch reads LWIPLYPLGCLAEAVSVVQSI. Active-site residues include tyrosine 288 and glutamate 295. The Lumenal segment spans residues 304 to 324; the sequence is PIFNETGRFSFTLPYPVKIKV. Residues 325–345 form a helical membrane-spanning segment; that stretch reads RFSFFLQIYLIMIFLGLYINF. The Cytoplasmic portion of the chain corresponds to 346 to 364; sequence RHLYKQRRRRYGQKKKKIH.

It belongs to the very long-chain fatty acids dehydratase HACD family. May interact with enzymes of the ELO family (including ELOVL1); with those enzymes that mediate condensation, the first of the four steps of the reaction cycle responsible for fatty acids elongation, may be part of a larger fatty acids elongase complex. Interacts with RAC1.

The protein resides in the endoplasmic reticulum membrane. The enzyme catalyses a very-long-chain (3R)-3-hydroxyacyl-CoA = a very-long-chain (2E)-enoyl-CoA + H2O. It catalyses the reaction (3R)-hydroxyhexadecanoyl-CoA = (2E)-hexadecenoyl-CoA + H2O. It participates in lipid metabolism; fatty acid biosynthesis. Its function is as follows. Catalyzes the third of the four reactions of the long-chain fatty acids elongation cycle. This endoplasmic reticulum-bound enzymatic process, allows the addition of two carbons to the chain of long- and very long-chain fatty acids/VLCFAs per cycle. This enzyme catalyzes the dehydration of the 3-hydroxyacyl-CoA intermediate into trans-2,3-enoyl-CoA, within each cycle of fatty acid elongation. Thereby, it participates in the production of VLCFAs of different chain lengths that are involved in multiple biological processes as precursors of membrane lipids and lipid mediators. Involved in Rac1-signaling pathways leading to the modulation of gene expression. The polypeptide is Very-long-chain (3R)-3-hydroxyacyl-CoA dehydratase 3 (Pongo abelii (Sumatran orangutan)).